The sequence spans 271 residues: Aminoglycoside 3'-phosphotransferase (271 aa).

Aspartate 198 (proton acceptor) is an active-site residue.

The protein belongs to the aminoglycoside phosphotransferase family.

The catalysed reaction is kanamycin A + ATP = kanamycin 3'-phosphate + ADP + H(+). Functionally, resistance to kanamycin and structurally-related aminoglycosides, including amikacin. This Escherichia coli protein is Aminoglycoside 3'-phosphotransferase (aphA1).